The sequence spans 204 residues: Large ribosomal subunit protein bL25 (204 aa).

It belongs to the bacterial ribosomal protein bL25 family. CTC subfamily. As to quaternary structure, part of the 50S ribosomal subunit; part of the 5S rRNA/L5/L18/L25 subcomplex. Contacts the 5S rRNA. Binds to the 5S rRNA independently of L5 and L18.

In terms of biological role, this is one of the proteins that binds to the 5S RNA in the ribosome where it forms part of the central protuberance. The sequence is that of Large ribosomal subunit protein bL25 from Pseudomonas aeruginosa (strain LESB58).